Consider the following 252-residue polypeptide: Orotidine 5'-phosphate decarboxylase (252 aa).

Substrate contacts are provided by residues Asp-24, Lys-46, 73 to 82, Thr-137, Arg-199, Gln-208, Gly-228, and Arg-229; that span reads DLKFHDIPNT. Catalysis depends on Lys-75, which acts as the Proton donor.

Belongs to the OMP decarboxylase family. Type 1 subfamily. Homodimer.

It carries out the reaction orotidine 5'-phosphate + H(+) = UMP + CO2. The protein operates within pyrimidine metabolism; UMP biosynthesis via de novo pathway; UMP from orotate: step 2/2. In terms of biological role, catalyzes the decarboxylation of orotidine 5'-monophosphate (OMP) to uridine 5'-monophosphate (UMP). This Moorella thermoacetica (strain ATCC 39073 / JCM 9320) protein is Orotidine 5'-phosphate decarboxylase.